Consider the following 509-residue polypeptide: MGGSARARWVAVGLGVVGLLCAVLGVVMILVMPSLIKQQVLKNVRIDPSSLSFAMWKEIPVPFYLSVYFFEVVNPSEILKGEKPVVRERGPYVYREFRHKANITFNDNDTVSFVEHRSLHFQPDRSHGSESDYIILPNILVLGGAVMMESKSAGLKLMMTLGLATLGQRAFMNRTVGEILWGYEDPFVNFINKYLPDMFPIKGKFGLFVEMNNSDSGLFTVFTGVQNFSKIHLVDRWNGLSKVNYWHSEQCNMINGTSGQMWAPFMTPQSSLEFFSPEACRSMKLTYHDSGVFEGIPTYRFTAPKTLFANGSVYPPNEGFCPCLESGIQNVSTCRFGAPLFLSHPHFYNADPVLSEAVLGLNPDPREHSLFLDIHPVTGIPMNCSVKLQISLYIKAVKGIGQTGKIEPVVLPLLWFEQSGAMGGEPLNTFYTQLVLMPQVLQYVQYVLLGLGGLLLLVPVIYQLRSQEKCFLFWSGSKKGSQDKEAIQAYSESLMSPAAKGTVLQEAKL.

The Cytoplasmic portion of the chain corresponds to Met-1–Ala-11. Residues Val-12 to Met-32 traverse the membrane as a helical segment. Topologically, residues Pro-33–Val-440 are extracellular. Residues Asn-102, Asn-108, Asn-173, Asn-212, Asn-227, Asn-255, Asn-310, Asn-330, and Asn-383 are each glycosylated (N-linked (GlcNAc...) asparagine). A disulfide bridge links Cys-251 with Cys-384. The helical transmembrane segment at Leu-441–Ile-461 threads the bilayer. The Cytoplasmic segment spans residues Tyr-462 to Leu-509.

The protein belongs to the CD36 family. Post-translationally, N-glycosylated. The six cysteines of the extracellular domain are all involved in intramolecular disulfide bonds.

Its subcellular location is the cell membrane. It is found in the membrane. It localises to the caveola. Receptor for different ligands such as phospholipids, cholesterol ester, lipoproteins, phosphatidylserine and apoptotic cells. Receptor for HDL, mediating selective uptake of cholesteryl ether and HDL-dependent cholesterol efflux. Also facilitates the flux of free and esterified cholesterol between the cell surface and apoB-containing lipoproteins and modified lipoproteins, although less efficiently than HDL. May be involved in the phagocytosis of apoptotic cells, via its phosphatidylserine binding activity. The protein is Scavenger receptor class B member 1 (SCARB1) of Cricetulus griseus (Chinese hamster).